Reading from the N-terminus, the 428-residue chain is Gamma-glutamyl phosphate reductase (428 aa).

Belongs to the gamma-glutamyl phosphate reductase family.

The protein localises to the cytoplasm. The enzyme catalyses L-glutamate 5-semialdehyde + phosphate + NADP(+) = L-glutamyl 5-phosphate + NADPH + H(+). It functions in the pathway amino-acid biosynthesis; L-proline biosynthesis; L-glutamate 5-semialdehyde from L-glutamate: step 2/2. In terms of biological role, catalyzes the NADPH-dependent reduction of L-glutamate 5-phosphate into L-glutamate 5-semialdehyde and phosphate. The product spontaneously undergoes cyclization to form 1-pyrroline-5-carboxylate. In Chelativorans sp. (strain BNC1), this protein is Gamma-glutamyl phosphate reductase.